We begin with the raw amino-acid sequence, 603 residues long: F-box only protein 46 (603 aa).

Residues 20–54 are disordered; the sequence is YSQNQPRPPSATLKPPVCPDTSSGTEPDHRPAHLE. A phosphoserine mark is found at serine 21 and serine 67. 4 disordered regions span residues 111–163, 235–301, 332–359, and 396–442; these read GGSR…PTSS, EAQR…TRAK, EASE…ARDC, and TVSP…GTTD. Threonine 347 bears the Phosphothreonine mark. Residues 347-356 are compositionally biased toward pro residues; it reads TPPAPPPPPA. One can recognise an F-box domain in the interval 470–522; that stretch reads RQYMLLLPEHVLVKIFSFLPTRALAALKCTCHHFKGIIEAFGVRATDSRWSRD.

Part of a SCF (SKP1-cullin-F-box) protein ligase complex SCF(FBXO46) composed of CUL1, SKP1, RBX1 and FBXO46. Post-translationally, phosphorylated by ATM in response to DNA damage, promoting ubiquitination and degradation by the SCF(FBXO31) complex. ATM-phosphorylated FBXO46 is ubiquitinated and degradaded by the SCF(FBXO31) complex in response to DNA damage.

The protein operates within protein modification; protein ubiquitination. Its function is as follows. Substrate-recognition component of the SCF(FBXO46) protein ligase complex, which mediates the ubiquitination and degradation of target proteins. In absence of stress, the SCF(FBXO46) complex catalyzes ubiquitination and degradation of MTOR-phosphorylated FBXO31. The polypeptide is F-box only protein 46 (Fbxo46) (Rattus norvegicus (Rat)).